A 114-amino-acid chain; its full sequence is UPF0145 protein TT_C1581 (114 aa).

Belongs to the UPF0145 family.

This is UPF0145 protein TT_C1581 from Thermus thermophilus (strain ATCC BAA-163 / DSM 7039 / HB27).